We begin with the raw amino-acid sequence, 275 residues long: Light-independent protochlorophyllide reductase iron-sulfur ATP-binding protein (275 aa).

Residues 12–17 (GIGKST) and lysine 41 each bind ATP. A Mg(2+)-binding site is contributed by serine 16. Residues cysteine 97 and cysteine 131 each contribute to the [4Fe-4S] cluster site. Position 182-183 (182-183 (NR)) interacts with ATP.

Belongs to the NifH/BchL/ChlL family. Homodimer. Protochlorophyllide reductase is composed of three subunits; BchL, BchN and BchB. [4Fe-4S] cluster serves as cofactor.

It carries out the reaction chlorophyllide a + oxidized 2[4Fe-4S]-[ferredoxin] + 2 ADP + 2 phosphate = protochlorophyllide a + reduced 2[4Fe-4S]-[ferredoxin] + 2 ATP + 2 H2O. Its pathway is porphyrin-containing compound metabolism; bacteriochlorophyll biosynthesis (light-independent). Functionally, component of the dark-operative protochlorophyllide reductase (DPOR) that uses Mg-ATP and reduced ferredoxin to reduce ring D of protochlorophyllide (Pchlide) to form chlorophyllide a (Chlide). This reaction is light-independent. The L component serves as a unique electron donor to the NB-component of the complex, and binds Mg-ATP. This Chlorobium phaeobacteroides (strain DSM 266 / SMG 266 / 2430) protein is Light-independent protochlorophyllide reductase iron-sulfur ATP-binding protein.